The sequence spans 508 residues: Photosystem II CP47 reaction center protein (508 aa).

The next 6 membrane-spanning stretches (helical) occupy residues 21-36, 101-115, 140-156, 203-218, 237-252, and 457-472; these read AVHI…WAGS, IVFS…IWHW, GIHL…FGAF, IAAG…FHLS, VLSS…AFVV, and TFAL…HGAR.

The protein belongs to the PsbB/PsbC family. PsbB subfamily. PSII is composed of 1 copy each of membrane proteins PsbA, PsbB, PsbC, PsbD, PsbE, PsbF, PsbH, PsbI, PsbJ, PsbK, PsbL, PsbM, PsbT, PsbX, PsbY, PsbZ, Psb30/Ycf12, at least 3 peripheral proteins of the oxygen-evolving complex and a large number of cofactors. It forms dimeric complexes. It depends on Binds multiple chlorophylls. PSII binds additional chlorophylls, carotenoids and specific lipids. as a cofactor.

It is found in the plastid. Its subcellular location is the chloroplast thylakoid membrane. One of the components of the core complex of photosystem II (PSII). It binds chlorophyll and helps catalyze the primary light-induced photochemical processes of PSII. PSII is a light-driven water:plastoquinone oxidoreductase, using light energy to abstract electrons from H(2)O, generating O(2) and a proton gradient subsequently used for ATP formation. This is Photosystem II CP47 reaction center protein from Brachypodium distachyon (Purple false brome).